The following is a 305-amino-acid chain: Probable lipid kinase YegS-like (305 aa).

The DAGKc domain maps to 1–129; sequence MTQRRAMLIL…VDLGEVGGKL (129 aa). ATP contacts are provided by residues T39, 65 to 71, and T92; that span reads GDGTLRD. Mg(2+) is bound by residues L210, D213, and L215. Residue E268 is the Proton acceptor of the active site.

Belongs to the diacylglycerol/lipid kinase family. YegS lipid kinase subfamily. Mg(2+) is required as a cofactor. Requires Ca(2+) as cofactor.

The protein localises to the cytoplasm. Its function is as follows. Probably phosphorylates lipids; the in vivo substrate is unknown. The protein is Probable lipid kinase YegS-like of Pseudomonas syringae pv. tomato (strain ATCC BAA-871 / DC3000).